The primary structure comprises 3416 residues: Genome polyprotein (3416 aa).

The disordered stretch occupies residues 1-34 (MAKGAVLKGKGGGPPRRVPKETAKKTRQGPGRLP). At 1–99 (MAKGAVLKGK…NKRRGKRRST (99 aa)) the chain is on the cytoplasmic side. A propeptide spans 97 to 117 (RSTTGLLTPILLACLATLVFS) (ER anchor for the capsid protein C, removed in mature form by serine protease NS3). Residues 100–120 (TGLLTPILLACLATLVFSATV) traverse the membrane as a helical segment. Residues 121–243 (RRERTGNMVI…HLTRVEGWVW (123 aa)) are Extracellular-facing. Asn145 carries N-linked (GlcNAc...) asparagine; by host glycosylation. A helical transmembrane segment spans residues 244–261 (KNKFLTAAFCAVVWMVTD). Residue Ser262 is a topological domain, cytoplasmic. A helical transmembrane segment spans residues 263–281 (LPTRFIVITVALCLAPTYA). Residues 282–728 (TRCTHLQNRD…HTAFGAAFNT (447 aa)) are Extracellular-facing. 6 disulfide bridges follow: Cys284/Cys311, Cys341/Cys397, Cys341/Cys402, Cys355/Cys386, Cys373/Cys397, and Cys373/Cys402. Positions 379 to 392 (DRGWGNHCGLFGKG) are fusion peptide. Asn435 is a glycosylation site (N-linked (GlcNAc...) asparagine; by host). Intrachain disulfides connect Cys467–Cys571 and Cys588–Cys619. The helical transmembrane segment at 729 to 749 (IFGGVGFLPRILLGVALAWLG) threads the bilayer. At 750-756 (LNSRNPT) the chain is on the cytoplasmic side. Residues 757–777 (LSVGFLITGGLVLTMTLGVGA) traverse the membrane as a helical segment. Residues 778 to 1134 (DMGCAIDANR…RSMVLADNGA (357 aa)) are Extracellular-facing. Intrachain disulfides connect Cys781–Cys792, Cys832–Cys922, Cys957–Cys1002, Cys1059–Cys1108, Cys1070–Cys1092, and Cys1091–Cys1095. Residues Asn862, Asn985, and Asn1001 are each glycosylated (N-linked (GlcNAc...) asparagine; by host). Residues 1135-1155 (MLSEGGVPGIVAVFVVLELVI) traverse the membrane as a helical segment. Topologically, residues 1156 to 1164 (RRRPTTGSS) are lumenal. A helical transmembrane segment spans residues 1165 to 1185 (VVWCGMVVLGLVVTGLVTIEG). Residues 1186-1189 (LCRY) lie on the Cytoplasmic side of the membrane. A helical transmembrane segment spans residues 1190 to 1210 (VVAVGILMSMELGPEIVALVL). At 1211–1235 (LQAVFDMRTGLLVAFAVKRAYTTRE) the chain is on the lumenal side. The chain crosses the membrane as a helical span at residues 1236–1256 (AVATYFLLLVLELGFPEASLS). Residues 1257-1295 (NIWKWADSLAMGALILQACGQEGRTRVGYLLAAMMTQKD) are Cytoplasmic-facing. Residues 1296–1316 (MVIIHTGLTIFLSAATAMAVW) form a helical membrane-spanning segment. Over 1317 to 1361 (SMIKGQRDQKGLSWATPLAGLLGGEGVGLRLLAFRKLAERRNRRS) the chain is Lumenal. Residues 1362-1379 (FSEPLTVVGVMLTVASGM) form a helical membrane-spanning segment. Topologically, residues 1380–1384 (VRHTS) are cytoplasmic. Residues 1385–1405 (QEALCALVAGAFLLLMMVLGT) traverse the membrane as a helical segment. Residues 1406 to 1456 (RKMQLTAEWCGEVEWNPDLVNEGGEVNLKVRQDAMGNLHLTEVEKEERAMA) are Lumenal-facing. Residues 1412 to 1451 (AEWCGEVEWNPDLVNEGGEVNLKVRQDAMGNLHLTEVEKE) form an interacts with and activates NS3 protease region. The helical intramembrane region spans 1457–1477 (LWLLAGLVASAFHWAGILIVL). Residues 1478–2162 (AVWTLFEMLG…RMAERDAPEA (685 aa)) lie on the Lumenal side of the membrane. The Peptidase S7 domain maps to 1492 to 1671 (SELVFSGQET…EAEKSRPEIP (180 aa)). Residues His1545, Asp1569, and Ser1629 each act as charge relay system; for serine protease NS3 activity in the active site. The 157-residue stretch at 1677-1833 (TGWMSKGQIT…ESNGAIMSEE (157 aa)) folds into the Helicase ATP-binding domain. 1690–1697 (MHPGSGKT) contacts ATP. The DEAH box signature appears at 1781–1784 (DEAH). The 159-residue stretch at 1844-2002 (GFDWITEYEG…TLRGPVATFY (159 aa)) folds into the Helicase C-terminal domain. At Lys1885 the chain carries N6-acetyllysine; by host. Residues 2163–2183 (FLTIVEVAVLGVATLGILWCF) traverse the membrane as a helical segment. Residues 2184–2191 (VARASVSR) are Cytoplasmic-facing. Positions 2192-2211 (MFLGTVVLFAALFLLWIGGV) form an intramembrane region, helical. Position 2212 (Asp2212) is a topological domain, lumenal. Residues 2213–2233 (YGHMAGIALIFYTLLTVLQPE) traverse the membrane as a helical segment. Residues 2234-2246 (PGKQRSSDDNRLA) are Cytoplasmic-facing. The helical transmembrane segment at 2247 to 2267 (YFLLGLFSLAGLVTANEMGML) threads the bilayer. At 2268 to 2301 (DKTKADLAGLVWRGEQRHPAWEEWTNVDIQPARS) the chain is on the lumenal side. The segment at residues 2302–2322 (WGTYVLIVSLFTPYMLHQLQT) is an intramembrane region (helical). Over 2323–2345 (KIQQLVNSSVASGAQAMRDLGGG) the chain is Lumenal. Residues 2346–2366 (TPFFGVAGHVIALGVTSLVGA) constitute an intramembrane region (helical). Residues 2367-2368 (TP) are Lumenal-facing. A helical membrane pass occupies residues 2369–2389 (MSLGLGVALAAFHLAIVASGL). Residues 2390 to 2432 (EAELTQRAHRVFFSAMVKNPMVDGDVINPFPDGETKPALYERR) are Cytoplasmic-facing. A helical transmembrane segment spans residues 2433–2453 (MSLILAIALCMGSVVLNRTAA). Topologically, residues 2454-2476 (SMTEAGAVGLAALGQLVHPETET) are lumenal. A helical membrane pass occupies residues 2477–2497 (LWTMPMACGMAGLVRGSFWGL). Residues 2498–3416 (LPMGHRLWLR…WDLKLESNII (919 aa)) lie on the Cytoplasmic side of the membrane. The mRNA cap 0-1 NS5-type MT domain maps to 2514 to 2778 (GGAEGETLGD…EVDLGTGTRC (265 aa)). Residue Ser2569 participates in S-adenosyl-L-methionine binding. Residue Ser2569 is modified to Phosphoserine. Lys2574 (for 2'-O-MTase activity) is an active-site residue. S-adenosyl-L-methionine is bound by residues Gly2599, Trp2600, Thr2617, Ile2618, Asp2644, and Val2645. The active-site For 2'-O-MTase activity is Asp2659. Ile2660 serves as a coordination point for S-adenosyl-L-methionine. Catalysis depends on for 2'-O-MTase activity residues Lys2696 and Glu2732. Positions 2732–2736 (EMYFS) are interaction with host SCRIB. An S-adenosyl-L-methionine-binding site is contributed by Tyr2734. Zn(2+) contacts are provided by Glu2952, His2956, Cys2961, and Cys2964. Residues 3042 to 3191 (GLFYADDTAG…RPIDDRFGKA (150 aa)) form the RdRp catalytic domain. Zn(2+) contacts are provided by His3226, Cys3242, and Cys3361.

It in the N-terminal section; belongs to the class I-like SAM-binding methyltransferase superfamily. mRNA cap 0-1 NS5-type methyltransferase family. As to quaternary structure, homodimer. Interacts (via N-terminus) with host EXOC1 (via C-terminus); this interaction results in EXOC1 degradation through the proteasome degradation pathway. In terms of assembly, forms heterodimers with envelope protein E in the endoplasmic reticulum and Golgi. Homodimer; in the endoplasmic reticulum and Golgi. Interacts with protein prM. Interacts with non-structural protein 1. As to quaternary structure, homodimer; Homohexamer when secreted. Interacts with envelope protein E. NS1 interacts with NS4B. Interacts with host complement protein CFH; this interaction leads to the degradation of C3. In terms of assembly, interacts (via N-terminus) with serine protease NS3. Forms a heterodimer with serine protease NS3. May form homooligomers. As to quaternary structure, forms a heterodimer with NS2B. Interacts with non-structural protein 2A (via N-terminus). Interacts with NS4B. Interacts with unphosphorylated RNA-directed RNA polymerase NS5; this interaction stimulates RNA-directed RNA polymerase NS5 guanylyltransferase activity. In terms of assembly, interacts with serine protease NS3. Homodimer. Interacts with host STAT2; this interaction inhibits the phosphorylation of the latter, and, when all viral proteins are present (polyprotein), targets STAT2 for degradation. Interacts with serine protease NS3. In terms of processing, specific enzymatic cleavages in vivo yield mature proteins. Cleavages in the lumen of endoplasmic reticulum are performed by host signal peptidase, whereas cleavages in the cytoplasmic side are performed by serine protease NS3. Signal cleavage at the 2K-4B site requires a prior NS3 protease-mediated cleavage at the 4A-2K site. Post-translationally, cleaved in post-Golgi vesicles by a host furin, releasing the mature small envelope protein M, and peptide pr. This cleavage is incomplete as up to 30% of viral particles still carry uncleaved prM. N-glycosylated. In terms of processing, N-glycosylated. The excreted form is glycosylated and this is required for efficient secretion of the protein from infected cells. Post-translationally, acetylated by host KAT5. Acetylation modulates NS3 RNA-binding and unwinding activities and plays an important positive role for viral replication. Phosphorylated on serines residues. This phosphorylation may trigger NS5 nuclear localization.

The protein resides in the virion. The protein localises to the host nucleus. It is found in the host cytoplasm. It localises to the host perinuclear region. Its subcellular location is the secreted. The protein resides in the virion membrane. The protein localises to the host endoplasmic reticulum membrane. The catalysed reaction is Selective hydrolysis of -Xaa-Xaa-|-Yaa- bonds in which each of the Xaa can be either Arg or Lys and Yaa can be either Ser or Ala.. It carries out the reaction RNA(n) + a ribonucleoside 5'-triphosphate = RNA(n+1) + diphosphate. The enzyme catalyses a ribonucleoside 5'-triphosphate + H2O = a ribonucleoside 5'-diphosphate + phosphate + H(+). It catalyses the reaction ATP + H2O = ADP + phosphate + H(+). The catalysed reaction is a 5'-end (5'-triphosphoguanosine)-ribonucleoside in mRNA + S-adenosyl-L-methionine = a 5'-end (N(7)-methyl 5'-triphosphoguanosine)-ribonucleoside in mRNA + S-adenosyl-L-homocysteine. It carries out the reaction a 5'-end (N(7)-methyl 5'-triphosphoguanosine)-ribonucleoside in mRNA + S-adenosyl-L-methionine = a 5'-end (N(7)-methyl 5'-triphosphoguanosine)-(2'-O-methyl-ribonucleoside) in mRNA + S-adenosyl-L-homocysteine + H(+). Plays a role in virus budding by binding to the cell membrane and gathering the viral RNA into a nucleocapsid that forms the core of a mature virus particle. During virus entry, may induce genome penetration into the host cytoplasm after hemifusion induced by the surface proteins. Can migrate to the cell nucleus where it modulates host functions. Its function is as follows. Inhibits RNA silencing by interfering with host Dicer. Functionally, prevents premature fusion activity of envelope proteins in trans-Golgi by binding to envelope protein E at pH6.0. After virion release in extracellular space, gets dissociated from E dimers. In terms of biological role, acts as a chaperone for envelope protein E during intracellular virion assembly by masking and inactivating envelope protein E fusion peptide. prM is the only viral peptide matured by host furin in the trans-Golgi network probably to avoid catastrophic activation of the viral fusion activity in acidic Golgi compartment prior to virion release. prM-E cleavage is inefficient, and many virions are only partially matured. These uncleaved prM would play a role in immune evasion. May play a role in virus budding. Exerts cytotoxic effects by activating a mitochondrial apoptotic pathway through M ectodomain. May display a viroporin activity. Its function is as follows. Binds to host cell surface receptor and mediates fusion between viral and cellular membranes. Envelope protein is synthesized in the endoplasmic reticulum in the form of heterodimer with protein prM. They play a role in virion budding in the ER, and the newly formed immature particle is covered with 60 spikes composed of heterodimer between precursor prM and envelope protein E. The virion is transported to the Golgi apparatus where the low pH causes dissociation of PrM-E heterodimers and formation of E homodimers. prM-E cleavage is inefficient, and many virions are only partially matured. These uncleaved prM would play a role in immune evasion. Functionally, involved in immune evasion, pathogenesis and viral replication. Once cleaved off the polyprotein, is targeted to three destinations: the viral replication cycle, the plasma membrane and the extracellular compartment. Essential for viral replication. Required for formation of the replication complex and recruitment of other non-structural proteins to the ER-derived membrane structures. Excreted as a hexameric lipoparticle that plays a role against host immune response. Antagonizing the complement function. Binds to the host macrophages and dendritic cells. Inhibits signal transduction originating from Toll-like receptor 3 (TLR3). In terms of biological role, component of the viral RNA replication complex that functions in virion assembly and antagonizes the host immune response. Required cofactor for the serine protease function of NS3. May have membrane-destabilizing activity and form viroporins. Its function is as follows. Displays three enzymatic activities: serine protease, NTPase and RNA helicase. NS3 serine protease, in association with NS2B, performs its autocleavage and cleaves the polyprotein at dibasic sites in the cytoplasm: C-prM, NS2A-NS2B, NS2B-NS3, NS3-NS4A, NS4A-2K and NS4B-NS5. NS3 RNA helicase binds RNA and unwinds dsRNA in the 3' to 5' direction. Functionally, regulates the ATPase activity of the NS3 helicase activity. NS4A allows NS3 helicase to conserve energy during unwinding. In terms of biological role, functions as a signal peptide for NS4B and is required for the interferon antagonism activity of the latter. Induces the formation of ER-derived membrane vesicles where the viral replication takes place. Inhibits interferon (IFN)-induced host STAT1 phosphorylation and nuclear translocation, thereby preventing the establishment of cellular antiviral state by blocking the IFN-alpha/beta pathway. Inhibits STAT2 translocation in the nucleus after IFN-alpha treatment. Its function is as follows. Replicates the viral (+) and (-) RNA genome, and performs the capping of genomes in the cytoplasm. NS5 methylates viral RNA cap at guanine N-7 and ribose 2'-O positions. Besides its role in RNA genome replication, also prevents the establishment of cellular antiviral state by blocking the interferon-alpha/beta (IFN-alpha/beta) signaling pathway. Inhibits host TYK2 and STAT2 phosphorylation, thereby preventing activation of JAK-STAT signaling pathway. This chain is Genome polyprotein, found in Homo sapiens (Human).